A 462-amino-acid chain; its full sequence is L-seryl-tRNA(Sec) selenium transferase (462 aa).

An N6-(pyridoxal phosphate)lysine modification is found at lysine 294.

The protein belongs to the SelA family. As to quaternary structure, homodecamer; pentamer of dimers. Binds only one seryl-tRNA(Sec) per dimer. Pyridoxal 5'-phosphate is required as a cofactor.

The protein localises to the cytoplasm. It catalyses the reaction L-seryl-tRNA(Sec) + selenophosphate + H(+) = L-selenocysteinyl-tRNA(Sec) + phosphate. It functions in the pathway aminoacyl-tRNA biosynthesis; selenocysteinyl-tRNA(Sec) biosynthesis; selenocysteinyl-tRNA(Sec) from L-seryl-tRNA(Sec) (bacterial route): step 1/1. Functionally, converts seryl-tRNA(Sec) to selenocysteinyl-tRNA(Sec) required for selenoprotein biosynthesis. This chain is L-seryl-tRNA(Sec) selenium transferase, found in Yersinia pestis bv. Antiqua (strain Antiqua).